Here is a 445-residue protein sequence, read N- to C-terminus: Na(+)-translocating NADH-quinone reductase subunit A (445 aa).

Belongs to the NqrA family. In terms of assembly, composed of six subunits; NqrA, NqrB, NqrC, NqrD, NqrE and NqrF.

The enzyme catalyses a ubiquinone + n Na(+)(in) + NADH + H(+) = a ubiquinol + n Na(+)(out) + NAD(+). Its function is as follows. NQR complex catalyzes the reduction of ubiquinone-1 to ubiquinol by two successive reactions, coupled with the transport of Na(+) ions from the cytoplasm to the periplasm. NqrA to NqrE are probably involved in the second step, the conversion of ubisemiquinone to ubiquinol. The chain is Na(+)-translocating NADH-quinone reductase subunit A from Marinomonas sp. (strain MWYL1).